Reading from the N-terminus, the 189-residue chain is Elongation factor P (189 aa).

Position 34 is an N6-(3,6-diaminohexanoyl)-5-hydroxylysine (Lys-34).

It belongs to the elongation factor P family. In terms of processing, may be beta-lysylated on the epsilon-amino group of Lys-34 by the combined action of EpmA and EpmB, and then hydroxylated on the C5 position of the same residue by EpmC (if this protein is present). Lysylation is critical for the stimulatory effect of EF-P on peptide-bond formation. The lysylation moiety may extend toward the peptidyltransferase center and stabilize the terminal 3-CCA end of the tRNA. Hydroxylation of the C5 position on Lys-34 may allow additional potential stabilizing hydrogen-bond interactions with the P-tRNA.

It is found in the cytoplasm. Its pathway is protein biosynthesis; polypeptide chain elongation. Involved in peptide bond synthesis. Alleviates ribosome stalling that occurs when 3 or more consecutive Pro residues or the sequence PPG is present in a protein, possibly by augmenting the peptidyl transferase activity of the ribosome. Modification of Lys-34 is required for alleviation. In Legionella pneumophila (strain Paris), this protein is Elongation factor P.